We begin with the raw amino-acid sequence, 454 residues long: Methylenetetrahydrofolate--tRNA-(uracil-5-)-methyltransferase TrmFO (454 aa).

9–14 (GAGLAG) contacts FAD. The interval 432–454 (LERVSPPSRETGEPTGAEQVDLA) is disordered.

Belongs to the MnmG family. TrmFO subfamily. Requires FAD as cofactor.

The protein resides in the cytoplasm. It catalyses the reaction uridine(54) in tRNA + (6R)-5,10-methylene-5,6,7,8-tetrahydrofolate + NADH + H(+) = 5-methyluridine(54) in tRNA + (6S)-5,6,7,8-tetrahydrofolate + NAD(+). The catalysed reaction is uridine(54) in tRNA + (6R)-5,10-methylene-5,6,7,8-tetrahydrofolate + NADPH + H(+) = 5-methyluridine(54) in tRNA + (6S)-5,6,7,8-tetrahydrofolate + NADP(+). In terms of biological role, catalyzes the folate-dependent formation of 5-methyl-uridine at position 54 (M-5-U54) in all tRNAs. In Pelobacter propionicus (strain DSM 2379 / NBRC 103807 / OttBd1), this protein is Methylenetetrahydrofolate--tRNA-(uracil-5-)-methyltransferase TrmFO.